A 527-amino-acid polypeptide reads, in one-letter code: Glucose-6-phosphate isomerase (527 aa).

The Proton donor role is filled by E323. Residues H352 and K454 contribute to the active site.

Belongs to the GPI family.

The protein resides in the cytoplasm. The catalysed reaction is alpha-D-glucose 6-phosphate = beta-D-fructose 6-phosphate. Its pathway is carbohydrate biosynthesis; gluconeogenesis. It participates in carbohydrate degradation; glycolysis; D-glyceraldehyde 3-phosphate and glycerone phosphate from D-glucose: step 2/4. Its function is as follows. Catalyzes the reversible isomerization of glucose-6-phosphate to fructose-6-phosphate. The chain is Glucose-6-phosphate isomerase from Prochlorococcus marinus (strain MIT 9515).